The chain runs to 705 residues: FAD-dependent monooxygenase ATEG_03635 (705 aa).

FAD contacts are provided by residues 86-115 (DVLI…IVDK), Val208, 308-310 (RFY), and Ser408.

Belongs to the PheA/TfdB FAD monooxygenase family. It depends on FAD as a cofactor.

The protein operates within secondary metabolite biosynthesis. Its function is as follows. FAD-dependent monooxygenase; part of the cluster A that mediates the biosynthesis of azasperpyranones, members of the azaphilone family that exhibit anti-cancer activities. Azasperpyranones are synthesized by 2 clusters, A and B. Cluster A is responsible for the production of the polyhydric phenol moiety while the azaphilonoid scaffold is produced by the cluster B. The non-reducing polyketide synthase ATEG_03629 produces 5-methyl orsellinic acid, which is then reduced to 5-methyl orsellinic aldehyde by the NRPS-like protein ATEG_03630. 5-methyl orsellinic aldehyde is then first hydroxylated by the FAD-dependent monooxygenase ATEG_03635 and subsequently hydroxylated by the cytochrome P450 monooxygenase ATEG_03631 to produce the unstable polyhydric phenol precursor of azasperpyranones. On the other hand, the polyketide synthase ATEG_07659 is responsible for producing the 3,5-dimethyloctadienone moiety from acetyl-CoA, three malonyl-CoA, and two S-adenosyl methionines (SAM). The 3,5-dimethyloctadienone moiety is then loaded onto the SAT domain of ATEG_07661 and extended with four malonyl-CoA and one SAM, which leads to the formation of 2,4-dihydroxy-6-(5,7-dimethyl-2-oxo-trans-3-trans-5-nonadienyl)-3-methylbenzaldehyde (compound 8) after reductive release and aldol condensation. The FAD-dependent monooxygenase ATEG_07662 is the next enzyme in the biosynthesis sequence and hydroxylates the side chain at the benzylic position of compound 8. In Aspergillus nidulans, afoF, the ortholog of the FAD-dependent oxygenase ATEG_07660, is the key enzyme for the biosynthesis of asperfuranone by catalyzing the hydroxylation at C-8 of to prevent the formation of a six-membered ring hemiacetal intermediate and thus facilitating the formation of a five-membered ring to produce asperfuranone. In Aspergillus terreus, ATEG_07660 is probably not functional, which leads to the formation of the six-membered ring hemiacetal intermediate presperpyranone instead of asperfuranone. Finally, ATEG_03636 is involved in the condensation of the polyhydric phenol moiety produced by cluster A and the perasperpyranone precursor produced by cluster B, to yield azasperpyranone A. Further modifications of azasperpyranone A result in the production of derivatives, including azasperpyranone B to F. This chain is FAD-dependent monooxygenase ATEG_03635, found in Aspergillus terreus (strain NIH 2624 / FGSC A1156).